The following is a 710-amino-acid chain: Tubulin polyglutamylase TTLL11 (710 aa).

The tract at residues 41–135 (VRVDAGAAGE…QRPVTVDSSK (95 aa)) is disordered. Over residues 51–60 (PECKAGEEQP) the composition is skewed to basic and acidic residues. Residues 64-82 (APAPAQPSAAEEGNTQVLQ) show a composition bias toward low complexity. Pro residues predominate over residues 83–93 (RPPPTLPPSKP). Over residues 123 to 135 (NGSQRPVTVDSSK) the composition is skewed to polar residues. One can recognise a TTL domain in the interval 128–480 (PVTVDSSKAR…EVKVAVIRDT (353 aa)). Residues lysine 249, 255 to 256 (QG), 282 to 285 (QEYI), and 295 to 297 (KFD) each bind ATP. Glutamine 255 is an a protein binding site. Residue arginine 321 coordinates L-glutamate. 343-344 (TN) provides a ligand contact to ATP. Tyrosine 345, serine 346, and lysine 365 together coordinate L-glutamate. 3 residues coordinate Mg(2+): aspartate 428, glutamate 441, and asparagine 443. Residues 467 to 538 (LVDEEVKVAV…SICLKQVFPK (72 aa)) are c-MTBD region. Lysine 473 is a binding site for L-glutamate. Positions 665 to 710 (GVPSGGRPPHRGPPQEPSPSAQPAGDNPPPRTSCANKLSHPRHTLS) are disordered.

Belongs to the tubulin--tyrosine ligase family. Mg(2+) is required as a cofactor.

It is found in the cytoplasm. It localises to the cytoskeleton. Its subcellular location is the cilium basal body. It catalyses the reaction L-glutamyl-[protein] + L-glutamate + ATP = gamma-L-glutamyl-L-glutamyl-[protein] + ADP + phosphate + H(+). The catalysed reaction is (L-glutamyl)(n)-gamma-L-glutamyl-L-glutamyl-[protein] + L-glutamate + ATP = (L-glutamyl)(n+1)-gamma-L-glutamyl-L-glutamyl-[protein] + ADP + phosphate + H(+). Polyglutamylase which modifies tubulin, generating polyglutamate side chains of variable lengths on the gamma-carboxyl group of specific glutamate residues within the C-terminal tail of tubulin. Preferentially mediates ATP-dependent polyglutamate long side-chain elongation over the initiation step of the polyglutamylation reaction. Preferentially modifies the alpha-tubulin tail over a beta-tail. Required for CCSAP localization to both spindle and cilia microtubules. Promotes tubulin polyglutamylation which stimulates spastin/SPAST-mediated microtubule severing, thereby regulating microtubule functions. The chain is Tubulin polyglutamylase TTLL11 from Homo sapiens (Human).